The primary structure comprises 109 residues: Putative double-stranded DNA mimic protein KPK_2119 (109 aa).

It belongs to the putative dsDNA mimic protein family.

May act as a double-stranded DNA (dsDNA) mimic. Probably regulates the activity of a dsDNA-binding protein. The chain is Putative double-stranded DNA mimic protein KPK_2119 from Klebsiella pneumoniae (strain 342).